The primary structure comprises 167 residues: Secretion monitor (167 aa).

A signal peptide spans 1–36 (MIGILNRWRQFGRRYFWPHLLLGMVAASFGLPQASA).

Belongs to the SecM family.

It localises to the cytoplasm. It is found in the cytosol. Its subcellular location is the periplasm. Functionally, regulates secA expression by translational coupling of the secM secA operon. Translational pausing at a specific Pro residue 5 residues before the end of the protein may allow disruption of a mRNA repressor helix that normally suppresses secA translation initiation. The protein is Secretion monitor of Erwinia tasmaniensis (strain DSM 17950 / CFBP 7177 / CIP 109463 / NCPPB 4357 / Et1/99).